The following is a 563-amino-acid chain: Membrane protein insertase YidC (563 aa).

A helical membrane pass occupies residues 1–21 (MDIKRTILIVALAIVTYVGVL). The tract at residues 43–62 (APGIPDTAAGTNGSASADVP) is disordered. The next 5 helical transmembrane spans lie at 344-364 (LELT…FWLL), 370-390 (ILGN…GLFF), 440-460 (LGGC…YWVL), 471-491 (WILW…PIIM), and 518-538 (PIIF…YWVV).

Belongs to the OXA1/ALB3/YidC family. Type 1 subfamily. In terms of assembly, interacts with the Sec translocase complex via SecD. Specifically interacts with transmembrane segments of nascent integral membrane proteins during membrane integration.

Its subcellular location is the cell inner membrane. In terms of biological role, required for the insertion and/or proper folding and/or complex formation of integral membrane proteins into the membrane. Involved in integration of membrane proteins that insert both dependently and independently of the Sec translocase complex, as well as at least some lipoproteins. Aids folding of multispanning membrane proteins. The protein is Membrane protein insertase YidC of Pseudomonas syringae pv. syringae (strain B728a).